We begin with the raw amino-acid sequence, 335 residues long: Beta-hexosaminidase (335 aa).

Substrate-binding positions include D60, R68, R133, and 163 to 164; that span reads KH. The active-site Proton donor/acceptor is H176. The Nucleophile role is filled by D247.

It belongs to the glycosyl hydrolase 3 family. NagZ subfamily.

It localises to the cytoplasm. The enzyme catalyses Hydrolysis of terminal non-reducing N-acetyl-D-hexosamine residues in N-acetyl-beta-D-hexosaminides.. It participates in cell wall biogenesis; peptidoglycan recycling. Functionally, plays a role in peptidoglycan recycling by cleaving the terminal beta-1,4-linked N-acetylglucosamine (GlcNAc) from peptide-linked peptidoglycan fragments, giving rise to free GlcNAc, anhydro-N-acetylmuramic acid and anhydro-N-acetylmuramic acid-linked peptides. The polypeptide is Beta-hexosaminidase (Xylella fastidiosa (strain M23)).